A 110-amino-acid polypeptide reads, in one-letter code: UPF0060 membrane protein PFL_4337 (110 aa).

Helical transmembrane passes span 5–25 (LWFF…WMWL), 31–51 (ALWV…LTKV), 59–79 (AYAA…AVVE), and 84–104 (LGSD…ILFG).

It belongs to the UPF0060 family.

It is found in the cell inner membrane. The polypeptide is UPF0060 membrane protein PFL_4337 (Pseudomonas fluorescens (strain ATCC BAA-477 / NRRL B-23932 / Pf-5)).